The chain runs to 480 residues: REST corepressor 1 (480 aa).

Residues Met1–Tyr105 are disordered. Low complexity-rich tracts occupy residues Ala21–Ala58 and Ser66–Ser89. An interaction with HDAC1 region spans residues Pro72–Arg251. The ELM2 domain maps to Gly97–Thr183. A Glycyl lysine isopeptide (Lys-Gly) (interchain with G-Cter in SUMO2) cross-link involves residue Lys116. Position 121 is a phosphoserine (Ser121). An SANT 1 domain is found at Pro184–Thr235. Residues Ser238–Asn265 are a coiled coil. The interval Ser238 to Pro308 is disordered. Position 254 is a phosphoserine (Ser254). Over residues Asp272–Pro282 the composition is skewed to basic and acidic residues. An interaction with KDM1A region spans residues Val290 to Ala378. Lys291 participates in a covalent cross-link: Glycyl lysine isopeptide (Lys-Gly) (interchain with G-Cter in SUMO2). A coiled-coil region spans residues Ala328–Gly363. Residues Lys375–Asn426 enclose the SANT 2 domain. Residues Ala436–Asp466 form a disordered region. At Ser454 the chain carries Phosphoserine. Residue Lys460 forms a Glycyl lysine isopeptide (Lys-Gly) (interchain with G-Cter in SUMO2) linkage.

The protein belongs to the CoREST family. In terms of assembly, component of a BHC histone deacetylase complex that contains HDAC1, HDAC2, HMG20B/BRAF35, KDM1A, RCOR1/CoREST and PHF21A/BHC80. The BHC complex may also contain ZMYM2, ZNF217, ZMYM3, GSE1 and GTF2I. Interacts with REST. Interacts with the SMARCE1/BAF57, suggesting that the BHC complex may recruit the ATP-dependent chromatin-remodeling SWI-SNF complex. Interacts directly with GFI1 and GFI1B in a RCOR/GFI/KDM1A/HDAC complex. Interacts with INMS1. Interacts with SOX2. As to expression, expressed in the external germinal layer (EGL) and internal granular layer (IGL) of the cerebellum and in Purkinje cells (at protein level).

Its subcellular location is the nucleus. Its function is as follows. Essential component of the BHC complex, a corepressor complex that represses transcription of neuron-specific genes in non-neuronal cells. The BHC complex is recruited at RE1/NRSE sites by REST and acts by deacetylating and demethylating specific sites on histones, thereby acting as a chromatin modifier. In the BHC complex, it serves as a molecular beacon for the recruitment of molecular machinery, including MeCP2 and SUV39H1, that imposes silencing across a chromosomal interval. Plays a central role in demethylation of Lys-4 of histone H3 by promoting demethylase activity of KDM1A on core histones and nucleosomal substrates. It also protects KDM1A from the proteasome. Component of a RCOR/GFI/KDM1A/HDAC complex that suppresses, via histone deacetylase (HDAC) recruitment, a number of genes implicated in multilineage blood cell development and controls hematopoietic differentiation. This chain is REST corepressor 1 (Rcor1), found in Mus musculus (Mouse).